A 245-amino-acid polypeptide reads, in one-letter code: tRNA (guanine-N(1)-)-methyltransferase (245 aa).

S-adenosyl-L-methionine-binding positions include Gly-111 and 131 to 136 (MGDYVL).

This sequence belongs to the RNA methyltransferase TrmD family. In terms of assembly, homodimer.

The protein localises to the cytoplasm. It carries out the reaction guanosine(37) in tRNA + S-adenosyl-L-methionine = N(1)-methylguanosine(37) in tRNA + S-adenosyl-L-homocysteine + H(+). Its function is as follows. Specifically methylates guanosine-37 in various tRNAs. This Staphylococcus aureus (strain USA300) protein is tRNA (guanine-N(1)-)-methyltransferase.